We begin with the raw amino-acid sequence, 295 residues long: Glutenin, low molecular weight subunit PTDUCD1 (295 aa).

Residues 1 to 20 form the signal peptide; it reads MKTFLVFALLAVVATSTIAQ. The disordered stretch occupies residues 30-61; that stretch reads ERPWQEQPLPPQHTLFPQQQPFPQQQQPPFSQ. Low complexity predominate over residues 41-61; that stretch reads QHTLFPQQQPFPQQQQPPFSQ.

The protein belongs to the gliadin/glutenin family. Disulfide-bridge linked aggregates.

Functionally, glutenins are high-molecular weight seed storage proteins of wheat endosperm. Thought to be responsible for the visco-elastic property of wheat dough. The chain is Glutenin, low molecular weight subunit PTDUCD1 from Triticum aestivum (Wheat).